Here is a 533-residue protein sequence, read N- to C-terminus: MSSKVEHPAGGYKKLFETVEELASPITAHVTGRIPVWLTGSLLRCGPGLFEVGSEQFYHLFDGQALLHKFDFKEGHVTYHRRFIRTDTYVRAMTEKRIVITEFGTFAFPDPCKNIFSRFLSYFQGLEVTDNTLVNVYPVGEDYYACTETNYITKVNPETLETIKKVDLCNYVSINGVTAHPLIENDGTVYNIGNCFGKHFSFAYNIVKIPPLQEDKEDPINKAKVVVQFPCSERFKPSYVHSFGLTPNYIVFVEQPVKINLFKFLSSWSIWGANYMDCFESHETMGVWMHVAEKLTGEYLNIKYRTSAFNLFHHINTYEDHGFLIVDLCCWKGFEFIYNYLYLANMRENWEEVKRNAEKAPQPEVRRYVLPLDIHKVDTGKNLVNLPYTTATAILRSDETIWLEPEVLFSGPRLAFEFPQINYKKFGGKDYTFAYGLGLNHFVPDRLSKLNVKTKEIWVWQEPDSYPSEPIFVSQPDAMEEDDGVVLSVIVNPGPGQKPAFLLILNAKDMSEIARAEVDINIPVTFHGMYKKA.

At S2 the chain carries N-acetylserine. C112 is lipidated: S-palmitoyl cysteine; in membrane form. Residue H180 participates in Fe cation binding. C231 carries S-palmitoyl cysteine; in membrane form lipidation. Residues H241 and H313 each contribute to the Fe cation site. Residues C329 and C330 are each lipidated (S-palmitoyl cysteine; in membrane form). H527 is a Fe cation binding site.

It belongs to the carotenoid oxygenase family. The cofactor is Fe(2+). Palmitoylation by LRAT regulates ligand binding specificity; the palmitoylated form (membrane form) specifically binds all-trans-retinyl-palmitate, while the soluble unpalmitoylated form binds all-trans-retinol (vitamin A). In terms of tissue distribution, retinal pigment epithelium specific.

It localises to the cell membrane. The catalysed reaction is an all-trans-retinyl ester + H2O = 11-cis-retinol + a fatty acid + H(+). It carries out the reaction lutein = (3R,3'S)-zeaxanthin. It catalyses the reaction all-trans-retinyl hexadecanoate + H2O = 11-cis-retinol + hexadecanoate + H(+). Its function is as follows. Critical isomerohydrolase in the retinoid cycle involved in regeneration of 11-cis-retinal, the chromophore of rod and cone opsins. Catalyzes the cleavage and isomerization of all-trans-retinyl fatty acid esters to 11-cis-retinol which is further oxidized by 11-cis retinol dehydrogenase to 11-cis-retinal for use as visual chromophore. Essential for the production of 11-cis retinal for both rod and cone photoreceptors. Also capable of catalyzing the isomerization of lutein to meso-zeaxanthin an eye-specific carotenoid. The soluble form binds vitamin A (all-trans-retinol), making it available for LRAT processing to all-trans-retinyl ester. The membrane form, palmitoylated by LRAT, binds all-trans-retinyl esters, making them available for IMH (isomerohydrolase) processing to all-cis-retinol. The soluble form is regenerated by transferring its palmitoyl groups onto 11-cis-retinol, a reaction catalyzed by LRAT. The sequence is that of Retinoid isomerohydrolase (RPE65) from Cynops pyrrhogaster (Japanese fire-bellied newt).